Here is a 117-residue protein sequence, read N- to C-terminus: MIIDSSRIPSFTQLHSTMTRAPLLLLCVALVLLGHVNGATVRNEDKWKPLNNPRNRDLFFRRLQAYFKGRGLDLGTFPNPFPTNENPRPLSFQSELTASASADYEEQKNSFHNYLKG.

The first 38 residues, 1–38, serve as a signal peptide directing secretion; the sequence is MIIDSSRIPSFTQLHSTMTRAPLLLLCVALVLLGHVNG.

The protein localises to the secreted. This is an uncharacterized protein from Homo sapiens (Human).